Reading from the N-terminus, the 485-residue chain is Signal recognition particle protein (485 aa).

GTP is bound by residues 107–114 (GLQGAGKT), 189–193 (DTAGR), and 247–250 (TKLD). Residues 452–485 (GFGGGAPAPQPGFRGYGPPKKQKKGSKKKKGFGL) form a disordered region. Over residues 471 to 485 (KKQKKGSKKKKGFGL) the composition is skewed to basic residues.

It belongs to the GTP-binding SRP family. SRP54 subfamily. In terms of assembly, part of the signal recognition particle protein translocation system, which is composed of SRP and FtsY.

Its subcellular location is the cytoplasm. It carries out the reaction GTP + H2O = GDP + phosphate + H(+). Involved in targeting and insertion of nascent membrane proteins into the cytoplasmic membrane. Binds to the hydrophobic signal sequence of the ribosome-nascent chain (RNC) as it emerges from the ribosomes. The SRP-RNC complex is then targeted to the cytoplasmic membrane where it interacts with the SRP receptor FtsY. The chain is Signal recognition particle protein from Synechococcus elongatus (strain ATCC 33912 / PCC 7942 / FACHB-805) (Anacystis nidulans R2).